We begin with the raw amino-acid sequence, 1349 residues long: Major capsid protein (1349 aa).

Belongs to the herpesviridae major capsid protein family. In terms of assembly, homomultimer. Makes the hexons and eleven out of twelve pentons. Interacts with triplex proteins 1/TRX1 and 2/TRX2; adjacent capsomers are linked together in groups of three by triplexes, heterotrimeric complexes composed of one molecule of TRX1 and two molecules of TRX2. Interacts with scaffold protein; this interaction allows efficient MCP transport to the host nucleus. Interacts with capsid vertex component 2/CVC2. Interacts with the small capsomere-interacting protein/SCP.

It is found in the virion. Its subcellular location is the host nucleus. In terms of biological role, self-assembles to form an icosahedral capsid with a T=16 symmetry, about 200 nm in diameter, and consisting of 150 hexons and 12 pentons (total of 162 capsomers). Hexons form the edges and faces of the capsid and are each composed of six MCP molecules. In contrast, one penton is found at each of the 12 vertices. Eleven of the pentons are MCP pentamers, while the last vertex is occupied by the portal complex. The capsid is surrounded by a layer of proteinaceous material designated the tegument which, in turn, is enclosed in an envelope of host cell-derived lipids containing virus-encoded glycoproteins. In Elephas maximus (Indian elephant), this protein is Major capsid protein.